The primary structure comprises 235 residues: Elongation factor Tu, chloroplastic (235 aa).

A tr-type G domain is found at 1-125 (KNMITGAAQM…AVDEYIPTPV (125 aa)). Residue 47-50 (NKQD) participates in GTP binding.

Belongs to the TRAFAC class translation factor GTPase superfamily. Classic translation factor GTPase family. EF-Tu/EF-1A subfamily.

It is found in the plastid. Its subcellular location is the chloroplast. The catalysed reaction is GTP + H2O = GDP + phosphate + H(+). In terms of biological role, GTP hydrolase that promotes the GTP-dependent binding of aminoacyl-tRNA to the A-site of ribosomes during protein biosynthesis. This chain is Elongation factor Tu, chloroplastic (tufA), found in Gracilariopsis lemaneiformis (Red alga).